We begin with the raw amino-acid sequence, 427 residues long: UDP-N-acetyl-D-mannosamine dehydrogenase (427 aa).

The NAD(+) site is built by Tyr19, Ile20, Asp39, Arg44, Thr91, and Thr130. Arg155, Val156, Lys207, Asn211, Arg214, His245, Arg247, and Gly258 together coordinate UDP-N-acetyl-alpha-D-mannosaminouronate. The active-site Proton donor/acceptor is Lys207. Cys261 (nucleophile) is an active-site residue. Residues Tyr318 and Lys319 each coordinate UDP-N-acetyl-alpha-D-mannosaminouronate. NAD(+) is bound at residue Arg326. Lys404 provides a ligand contact to UDP-N-acetyl-alpha-D-mannosaminouronate.

This sequence belongs to the UDP-glucose/GDP-mannose dehydrogenase family. Homotetramer; probably dimer of dimers.

The enzyme catalyses UDP-N-acetyl-alpha-D-mannosamine + 2 NAD(+) + H2O = UDP-N-acetyl-alpha-D-mannosaminouronate + 2 NADH + 3 H(+). Functionally, catalyzes the four-electron oxidation of UDP-N-acetyl-D-mannosamine (UDP-ManNAc), reducing NAD(+) and releasing UDP-N-acetylmannosaminuronic acid (UDP-ManNAcA). This Methanococcus maripaludis (strain C7 / ATCC BAA-1331) protein is UDP-N-acetyl-D-mannosamine dehydrogenase (wecC).